Here is a 298-residue protein sequence, read N- to C-terminus: Cyclin-C (298 aa).

In terms of domain architecture, Cyclin N-terminal spans 46–162; that stretch reads NFITAVATEC…ILDCCLVVHH (117 aa). A disordered region spans residues 278 to 298; that stretch reads KLPKPNTPIPPPQQQQSSYHM.

The protein belongs to the cyclin family. Cyclin C subfamily. As to quaternary structure, component of the Mediator complex.

The protein localises to the nucleus. Its function is as follows. Component of the Mediator complex, a coactivator involved in regulated gene transcription of nearly all RNA polymerase II-dependent genes. Mediator functions as a bridge to convey information from gene-specific regulatory proteins to the basal RNA polymerase II transcription machinery. Mediator is recruited to promoters by direct interactions with regulatory proteins and serves as a scaffold for the assembly of a functional preinitiation complex with RNA polymerase II and the general transcription factors. Binds to and activates cyclin-dependent kinase cdk-8 that phosphorylates the CTD (C-terminal domain) of the large subunit of RNA polymerase II (RNAp II), which may inhibit the formation of a transcription initiation complex. The chain is Cyclin-C (cic-1) from Caenorhabditis briggsae.